Reading from the N-terminus, the 589-residue chain is Arylsulfatase L (589 aa).

The signal sequence occupies residues 1-31 (MLHLHHSCLCFRSWLPAMLAVLLSLAPSASS). Ca(2+)-binding residues include aspartate 46 and aspartate 47. Residue asparagine 58 is glycosylated (N-linked (GlcNAc...) asparagine). Cysteine 86 lines the Ca(2+) pocket. The active-site Nucleophile is cysteine 86. Residue cysteine 86 is modified to 3-oxoalanine (Cys). Asparagine 125 carries an N-linked (GlcNAc...) asparagine glycan. Residue lysine 145 participates in substrate binding. The active site involves histidine 147. Asparagine 258 is a glycosylation site (N-linked (GlcNAc...) asparagine). Histidine 301 serves as a coordination point for substrate. The N-linked (GlcNAc...) asparagine glycan is linked to asparagine 344. Residues aspartate 353 and histidine 354 each contribute to the Ca(2+) site. Position 378 (lysine 378) interacts with substrate.

It belongs to the sulfatase family. Requires Ca(2+) as cofactor. Post-translationally, N-glycosylated. In terms of processing, the conversion to 3-oxoalanine (also known as C-formylglycine, FGly), of a serine or cysteine residue in prokaryotes and of a cysteine residue in eukaryotes, is critical for catalytic activity. Expressed in the pancreas, liver and kidney.

The protein localises to the golgi apparatus. It is found in the golgi stack. The catalysed reaction is an aryl sulfate + H2O = a phenol + sulfate + H(+). With respect to regulation, inhibited by millimolar concentrations of warfarin. Functionally, exhibits arylsulfatase activity towards the artificial substrate 4-methylumbelliferyl sulfate. May be essential for the correct composition of cartilage and bone matrix during development. Has no activity toward steroid sulfates. This is Arylsulfatase L from Homo sapiens (Human).